The chain runs to 615 residues: Protein PSK SIMULATOR 2 (615 aa).

A lipid anchor (N-myristoyl glycine) is attached at G2. The span at 16 to 27 (KKLRSNDDDKSR) shows a compositional bias: basic and acidic residues. 2 disordered regions span residues 16–59 (KKLR…KSSK) and 506–529 (AHGV…SNTQ). A compositionally biased stretch (low complexity) spans 42-52 (SDSYYSDNYGG). The segment covering 512–529 (QETNHVSPPNNRTISNTQ) has biased composition (polar residues).

Its subcellular location is the nucleus. In terms of biological role, promotes seedling growth probably via the regulation of phytosulfokine (PSK) signaling; PSK are peptide phytohormones acting as growth factors. Involved in PSK-induced root growth. Together with PSI1 and PSI3, required during vegetative growth and reproduction. This chain is Protein PSK SIMULATOR 2, found in Arabidopsis thaliana (Mouse-ear cress).